A 285-amino-acid polypeptide reads, in one-letter code: NAD kinase (285 aa).

The active-site Proton acceptor is D76. NAD(+)-binding positions include 76-77, 151-152, H162, R179, D181, 192-197, and Q252; these read DG, NE, and TAYSLS.

The protein belongs to the NAD kinase family. A divalent metal cation serves as cofactor.

It is found in the cytoplasm. The enzyme catalyses NAD(+) + ATP = ADP + NADP(+) + H(+). Functionally, involved in the regulation of the intracellular balance of NAD and NADP, and is a key enzyme in the biosynthesis of NADP. Catalyzes specifically the phosphorylation on 2'-hydroxyl of the adenosine moiety of NAD to yield NADP. The protein is NAD kinase of Haemophilus influenzae (strain ATCC 51907 / DSM 11121 / KW20 / Rd).